Reading from the N-terminus, the 94-residue chain is Aspartyl/glutamyl-tRNA(Asn/Gln) amidotransferase subunit C (94 aa).

Belongs to the GatC family. In terms of assembly, heterotrimer of A, B and C subunits.

The catalysed reaction is L-glutamyl-tRNA(Gln) + L-glutamine + ATP + H2O = L-glutaminyl-tRNA(Gln) + L-glutamate + ADP + phosphate + H(+). It carries out the reaction L-aspartyl-tRNA(Asn) + L-glutamine + ATP + H2O = L-asparaginyl-tRNA(Asn) + L-glutamate + ADP + phosphate + 2 H(+). Functionally, allows the formation of correctly charged Asn-tRNA(Asn) or Gln-tRNA(Gln) through the transamidation of misacylated Asp-tRNA(Asn) or Glu-tRNA(Gln) in organisms which lack either or both of asparaginyl-tRNA or glutaminyl-tRNA synthetases. The reaction takes place in the presence of glutamine and ATP through an activated phospho-Asp-tRNA(Asn) or phospho-Glu-tRNA(Gln). This Heliobacterium modesticaldum (strain ATCC 51547 / Ice1) protein is Aspartyl/glutamyl-tRNA(Asn/Gln) amidotransferase subunit C.